A 131-amino-acid chain; its full sequence is Large ribosomal subunit protein uL24 (131 aa).

Belongs to the universal ribosomal protein uL24 family. In terms of assembly, part of the 50S ribosomal subunit.

In terms of biological role, one of two assembly initiator proteins, it binds directly to the 5'-end of the 23S rRNA, where it nucleates assembly of the 50S subunit. Functionally, located at the polypeptide exit tunnel on the outside of the subunit. The sequence is that of Large ribosomal subunit protein uL24 from Korarchaeum cryptofilum (strain OPF8).